The sequence spans 119 residues: Phosphoribosyl-AMP cyclohydrolase (119 aa).

A Mg(2+)-binding site is contributed by aspartate 78. A Zn(2+)-binding site is contributed by cysteine 79. The Mg(2+) site is built by aspartate 80 and aspartate 82. Zn(2+)-binding residues include cysteine 95 and cysteine 102.

This sequence belongs to the PRA-CH family. Homodimer. The cofactor is Mg(2+). Zn(2+) serves as cofactor.

It localises to the cytoplasm. It carries out the reaction 1-(5-phospho-beta-D-ribosyl)-5'-AMP + H2O = 1-(5-phospho-beta-D-ribosyl)-5-[(5-phospho-beta-D-ribosylamino)methylideneamino]imidazole-4-carboxamide. Its pathway is amino-acid biosynthesis; L-histidine biosynthesis; L-histidine from 5-phospho-alpha-D-ribose 1-diphosphate: step 3/9. Functionally, catalyzes the hydrolysis of the adenine ring of phosphoribosyl-AMP. The sequence is that of Phosphoribosyl-AMP cyclohydrolase from Jannaschia sp. (strain CCS1).